Here is a 104-residue protein sequence, read N- to C-terminus: Large ribosomal subunit protein uL24 (104 aa).

It belongs to the universal ribosomal protein uL24 family. Part of the 50S ribosomal subunit.

In terms of biological role, one of two assembly initiator proteins, it binds directly to the 5'-end of the 23S rRNA, where it nucleates assembly of the 50S subunit. One of the proteins that surrounds the polypeptide exit tunnel on the outside of the subunit. This Brevibacillus brevis (strain 47 / JCM 6285 / NBRC 100599) protein is Large ribosomal subunit protein uL24.